The following is a 782-amino-acid chain: LPS-assembly protein LptD (782 aa).

Residues 1-24 (MKKNSYTRLSIAILSTLYSVSSLA) form the signal peptide.

The protein belongs to the LptD family. In terms of assembly, component of the lipopolysaccharide transport and assembly complex. Interacts with LptE and LptA.

The protein localises to the cell outer membrane. Its function is as follows. Together with LptE, is involved in the assembly of lipopolysaccharide (LPS) at the surface of the outer membrane. This is LPS-assembly protein LptD from Pasteurella multocida (strain Pm70).